The chain runs to 168 residues: Cyanate hydratase (168 aa).

Active-site residues include R94, E97, and S120.

This sequence belongs to the cyanase family.

The catalysed reaction is cyanate + hydrogencarbonate + 3 H(+) = NH4(+) + 2 CO2. In terms of biological role, catalyzes the reaction of cyanate with bicarbonate to produce ammonia and carbon dioxide. In Oryza sativa subsp. indica (Rice), this protein is Cyanate hydratase.